The sequence spans 122 residues: Ribonuclease P protein component (122 aa).

The protein belongs to the RnpA family. In terms of assembly, consists of a catalytic RNA component (M1 or rnpB) and a protein subunit.

It carries out the reaction Endonucleolytic cleavage of RNA, removing 5'-extranucleotides from tRNA precursor.. RNaseP catalyzes the removal of the 5'-leader sequence from pre-tRNA to produce the mature 5'-terminus. It can also cleave other RNA substrates such as 4.5S RNA. The protein component plays an auxiliary but essential role in vivo by binding to the 5'-leader sequence and broadening the substrate specificity of the ribozyme. In Roseiflexus sp. (strain RS-1), this protein is Ribonuclease P protein component.